Consider the following 387-residue polypeptide: Patatin-02 (387 aa).

The N-terminal stretch at Met1–Ala23 is a signal peptide. Residues Leu32 to Val230 enclose the PNPLA domain. Positions Gly36–Gly41 match the GXGXXG motif. The short motif at Gly75–Gly79 is the GXSXG element. Catalysis depends on Ser77, which acts as the Nucleophile. Residue Asn115 is glycosylated (N-linked (GlcNAc...) asparagine). Asp216 functions as the Proton acceptor in the catalytic mechanism. The DGA/G motif lies at Asp216 to Ala218. Residues Glu361–Ala385 adopt a coiled-coil conformation.

The protein belongs to the patatin family. As to expression, tuber and stolon.

It is found in the vacuole. Its function is as follows. Probable lipolytic acyl hydrolase (LAH), an activity which is thought to be involved in the response of tubers to pathogens. The chain is Patatin-02 from Solanum tuberosum (Potato).